A 167-amino-acid chain; its full sequence is MITDILAMNLQVVFCGINPGLSTAHHGYHFANPNNRFWKVIHQAGFTERLLTPAEEQHLLDTGCGITMLVERPTVEATELGRDELLQGGNAIVEKMTRYQPRALAVLGKQAFSQAFGIKKVSWGRQERRIGETQVWVLPNPSGLNRATLESLVASYQELHQALQDNV.

Belongs to the uracil-DNA glycosylase (UDG) superfamily. TDG/mug family. In terms of assembly, binds DNA as a monomer.

Its subcellular location is the cytoplasm. The catalysed reaction is Specifically hydrolyzes mismatched double-stranded DNA and polynucleotides, releasing free uracil.. Excises ethenocytosine and uracil, which can arise by alkylation or deamination of cytosine, respectively, from the corresponding mispairs with guanine in ds-DNA. It is capable of hydrolyzing the carbon-nitrogen bond between the sugar-phosphate backbone of the DNA and the mispaired base. The complementary strand guanine functions in substrate recognition. Required for DNA damage lesion repair in stationary-phase cells. This chain is G/U mismatch-specific DNA glycosylase, found in Pectobacterium atrosepticum (strain SCRI 1043 / ATCC BAA-672) (Erwinia carotovora subsp. atroseptica).